Reading from the N-terminus, the 486-residue chain is UDP-N-acetylmuramate--L-alanine ligase (486 aa).

ATP is bound at residue 132–138 (GTHGKTT).

This sequence belongs to the MurCDEF family.

It localises to the cytoplasm. It catalyses the reaction UDP-N-acetyl-alpha-D-muramate + L-alanine + ATP = UDP-N-acetyl-alpha-D-muramoyl-L-alanine + ADP + phosphate + H(+). It participates in cell wall biogenesis; peptidoglycan biosynthesis. Its function is as follows. Cell wall formation. The sequence is that of UDP-N-acetylmuramate--L-alanine ligase from Halorhodospira halophila (strain DSM 244 / SL1) (Ectothiorhodospira halophila (strain DSM 244 / SL1)).